Here is a 240-residue protein sequence, read N- to C-terminus: Protein FANTASTIC FOUR 2 (240 aa).

Disordered stretches follow at residues 89–124 (TTPR…PPIK) and 177–229 (LLSH…KPML). The region spanning 117–171 (NSFPPPIKFVEDSKYNRMVRWLGEDGRIVVQAIRVSSPPSCFVSERGEGRLRLIL) is the FAF domain. Over residues 184–200 (EEEEEETEEGIDEETSE) the composition is skewed to acidic residues. Positions 207–216 (GNKKFSRFSR) are enriched in basic residues. Residues 217–226 (RCKENGREPK) are compositionally biased toward basic and acidic residues.

This sequence belongs to the fantastic four family. As to expression, expressed in the shoot apex, stamens, carpels and young siliques. Detected in provascular and vascular tissue, and in the center of the vegetative and inflorescence meristems. Expressed in the funiculus. In roots and leaves, predominantly expressed in phloem.

Functionally, regulates the size of the shoot meristem by modulating the CLV3-WUS feedback loop. Can repress WUS but is under negative control by CLV3. The protein is Protein FANTASTIC FOUR 2 (FAF2) of Arabidopsis thaliana (Mouse-ear cress).